Here is a 353-residue protein sequence, read N- to C-terminus: Histidinol-phosphate aminotransferase (353 aa).

Lys209 carries the N6-(pyridoxal phosphate)lysine modification.

The protein belongs to the class-II pyridoxal-phosphate-dependent aminotransferase family. Histidinol-phosphate aminotransferase subfamily. As to quaternary structure, homodimer. It depends on pyridoxal 5'-phosphate as a cofactor.

It carries out the reaction L-histidinol phosphate + 2-oxoglutarate = 3-(imidazol-4-yl)-2-oxopropyl phosphate + L-glutamate. The protein operates within amino-acid biosynthesis; L-histidine biosynthesis; L-histidine from 5-phospho-alpha-D-ribose 1-diphosphate: step 7/9. This Buchnera aphidicola subsp. Cinara cedri (strain Cc) protein is Histidinol-phosphate aminotransferase.